A 35-amino-acid polypeptide reads, in one-letter code: Conotoxin Ca15a (35 aa).

Pro8 is modified (4-hydroxyproline).

In terms of processing, contains 4 disulfide bonds. As to expression, expressed by the venom duct.

The protein localises to the secreted. The polypeptide is Conotoxin Ca15a (Conus caracteristicus (Characteristic cone)).